A 201-amino-acid chain; its full sequence is MTDLLPPRFYARDALEVAADLLGASLCREQVVLRITEVEAYRWPEDTANHGRHGQTLRNEPLWGPPGRVYLYLCYGIHHLLNLVTGEEGQAAAVLIRACEPVAGLDLIQRRRRGKIKPGLLTGPGKVGAALGLDLSWNHHPLYEPGGLEVRRGTPVAALLAGPRVGIAYAHPEHRDAPWRLAIPDNPWVSCRSQLQPRQQN.

It belongs to the DNA glycosylase MPG family.

In Nitrosococcus oceani (strain ATCC 19707 / BCRC 17464 / JCM 30415 / NCIMB 11848 / C-107), this protein is Putative 3-methyladenine DNA glycosylase.